Here is a 100-residue protein sequence, read N- to C-terminus: MFAIFQTGGKQYKVQQGEKIYVEKLDLEVGSKISFDQVIMVEGSVGTPFVKNAVVNATVLKQGKQKKINIIKFKSKKHHLKRQGHRQPYTQLVIDSISVK.

This sequence belongs to the bacterial ribosomal protein bL21 family. In terms of assembly, part of the 50S ribosomal subunit. Contacts protein L20.

In terms of biological role, this protein binds to 23S rRNA in the presence of protein L20. This Ureaplasma urealyticum serovar 10 (strain ATCC 33699 / Western) protein is Large ribosomal subunit protein bL21.